Here is a 479-residue protein sequence, read N- to C-terminus: CBL-interacting serine/threonine-protein kinase 10 (479 aa).

The region spanning tyrosine 12–phenylalanine 266 is the Protein kinase domain. ATP-binding positions include leucine 18–valine 26 and lysine 41. Residue aspartate 134 is the Proton acceptor of the active site. Residues aspartate 152–glutamate 181 form an activation loop region. Serine 156 bears the Phosphoserine mark. The residue at position 170 (threonine 170) is a Phosphothreonine. The interval serine 286–glutamate 323 is disordered. Positions glutamate 288–glycine 300 are enriched in low complexity. Residues asparagine 311 to glutamate 323 are compositionally biased toward basic and acidic residues. One can recognise an NAF domain in the interval aspartate 322 to glycine 346. Residues lysine 350–isoleucine 379 form a PPI region. Residues serine 456 to phenylalanine 479 form a disordered region. Low complexity predominate over residues glutamine 457–glutamine 470.

It belongs to the protein kinase superfamily. CAMK Ser/Thr protein kinase family. SNF1 subfamily. In terms of assembly, interacts with CBL4/SOS3. Mn(2+) is required as a cofactor. As to expression, mostly expressed in roots.

It carries out the reaction L-seryl-[protein] + ATP = O-phospho-L-seryl-[protein] + ADP + H(+). The enzyme catalyses L-threonyl-[protein] + ATP = O-phospho-L-threonyl-[protein] + ADP + H(+). CIPK serine-threonine protein kinases interact with CBL proteins. Binding of a CBL protein to the regulatory NAF domain of CIPK protein lead to the activation of the kinase in a calcium-dependent manner. The polypeptide is CBL-interacting serine/threonine-protein kinase 10 (CIPK10) (Arabidopsis thaliana (Mouse-ear cress)).